A 258-amino-acid chain; its full sequence is 5'-nucleotidase SurE (258 aa).

Residues Asp14, Asp15, Ser45, and Asn101 each coordinate a divalent metal cation.

This sequence belongs to the SurE nucleotidase family. A divalent metal cation is required as a cofactor.

It localises to the cytoplasm. It catalyses the reaction a ribonucleoside 5'-phosphate + H2O = a ribonucleoside + phosphate. Nucleotidase that shows phosphatase activity on nucleoside 5'-monophosphates. This Chlorobium limicola (strain DSM 245 / NBRC 103803 / 6330) protein is 5'-nucleotidase SurE.